Here is a 470-residue protein sequence, read N- to C-terminus: Flotillin-like protein 1 (470 aa).

The S-palmitoyl cysteine moiety is linked to residue C35. Positions E305 to E354 form a coiled coil.

This sequence belongs to the band 7/mec-2 family. Flotillin subfamily. May be palmitoylated.

The protein resides in the cell membrane. It localises to the membrane. The protein localises to the caveola. Its function is as follows. May act as a scaffolding protein within caveolar membranes, functionally participating in formation of caveolae or caveolae-like vesicles. The protein is Flotillin-like protein 1 (FLOT1) of Arabidopsis thaliana (Mouse-ear cress).